Here is a 193-residue protein sequence, read N- to C-terminus: Small COPII coat GTPase SAR1 (193 aa).

An STAR; SAR1-N-terminal activation recruitment. Required for the activation and subsequent recruitment to ER membrane motif is present at residues 3–5; the sequence is FLW. The tract at residues 11-15 is mediates recruitment to ER membranes; the sequence is VLNML. A Mg(2+)-binding site is contributed by aspartate 30. Residues asparagine 31, alanine 32, glycine 33, lysine 34, threonine 35, and threonine 36 each coordinate GDP. Asparagine 31 contributes to the GTP binding site. 4 residues coordinate GTP: glycine 33, lysine 34, threonine 35, and threonine 36. Aspartate 71 serves as a coordination point for Mg(2+). GDP is bound by residues asparagine 130, lysine 131, aspartate 133, valine 176, and leucine 177. Residues asparagine 130, lysine 131, aspartate 133, valine 176, and leucine 177 each contribute to the GTP site.

It belongs to the small GTPase superfamily. SAR1 family. As to quaternary structure, homodimer; upon association with membrane. Part of the coat protein complex II/COPII, composed of SEC23/24 and SEC13/31 heterodimers, that it helps recruit and assemble on endoplasmic reticulum (ER) membranes at ER exit sites.

It is found in the endoplasmic reticulum membrane. The protein localises to the golgi apparatus. Its subcellular location is the golgi stack membrane. It localises to the cytoplasm. The protein resides in the cytosol. The enzyme catalyses GTP + H2O = GDP + phosphate + H(+). Its activity is regulated as follows. Small GTPases activation is mediated by guanine exchange factors (GEF), while inactivation through hydrolysis of the bound GTP is stimulated by GTPase activating proteins (GAP). Its function is as follows. Small GTPase that cycles between an active GTP-bound and an inactive GDP-bound state and mainly functions in vesicle-mediated endoplasmic reticulum (ER) to Golgi transport. The active GTP-bound form inserts into the endoplasmic reticulum membrane where it recruits the remainder of the coat protein complex II/COPII. The coat protein complex II assembling and polymerizing on endoplasmic reticulum membrane is responsible for both the sorting of cargos and the deformation and budding of membranes into vesicles destined to the Golgi. Plays a role in transporting the tyrosine kinase receptor let-23 from the endoplasmic reticulum to the plasma membrane of vulval precursor cells. The protein is Small COPII coat GTPase SAR1 of Caenorhabditis elegans.